The chain runs to 403 residues: Formin-like protein 21b (403 aa).

The FH2 domain occupies Met-1 to Lys-380. Residues Ala-373–Ile-403 form a disordered region.

The protein belongs to the formin-like family. Class-II subfamily.

The protein is Formin-like protein 21b (FH21B) of Arabidopsis thaliana (Mouse-ear cress).